Consider the following 157-residue polypeptide: Tripartite terminase subunit 2 (157 aa).

The interval 1-69 is disordered; the sequence is MSWAKQRVPF…DGEDGHALPD (69 aa). Residues 11-27 are compositionally biased toward acidic residues; the sequence is LDDDDGEEENDVQDDVD.

The protein belongs to the herpesviridae TRM2 protein family. Associates with TRM1 and TRM3 to form the tripartite terminase complex.

The protein localises to the host nucleus. Component of the molecular motor that translocates viral genomic DNA in empty capsid during DNA packaging. Forms a tripartite terminase complex together with TRM1 and TRM3 in the host cytoplasm. Once the complex reaches the host nucleus, it interacts with the capsid portal vertex. This portal forms a ring in which genomic DNA is translocated into the capsid. The sequence is that of Tripartite terminase subunit 2 from Homo sapiens (Human).